We begin with the raw amino-acid sequence, 132 residues long: Large-conductance mechanosensitive channel (132 aa).

The next 3 membrane-spanning stretches (helical) occupy residues 14-34, 38-58, and 67-87; these read VVDL…VSSL, IITP…LHFG, and GNFI…FMFV.

The protein belongs to the MscL family. In terms of assembly, homopentamer.

It localises to the cell membrane. Functionally, channel that opens in response to stretch forces in the membrane lipid bilayer. May participate in the regulation of osmotic pressure changes within the cell. The sequence is that of Large-conductance mechanosensitive channel from Bacillus cereus (strain ATCC 10987 / NRS 248).